Here is a 57-residue protein sequence, read N- to C-terminus: Large ribosomal subunit protein bL32c (57 aa).

This sequence belongs to the bacterial ribosomal protein bL32 family.

Its subcellular location is the plastid. It is found in the chloroplast. The sequence is that of Large ribosomal subunit protein bL32c from Drimys granadensis.